The following is a 500-amino-acid chain: ADP,ATP carrier protein 5 (500 aa).

A run of 11 helical transmembrane segments spans residues 21–41 (IYNYELGKFIPMSALMFCILF), 62–82 (IAGFAKVYCVTPAAALFVIIY), 94–114 (IFYYLTAFFIGFFVLFAFVIY), 149–169 (YIVYYSLAELWPNIFYVLLFW), 184–204 (FYTLFSLFGNSSLILVGFLMM), 224–244 (ITLVQISTILVTIVAVICCLL), 287–307 (LWLLLICSAAFGFAINLVEAV), 328–348 (LYILWTGVAIMVMTIIGNNVM), 357–377 (AVISPVIIMVTGVLFFVLIVF), 381–401 (ILSLFDGAILMSPLALAVSIG), and 469–489 (SISPVLMVVFTFVCLAWIYAV).

This sequence belongs to the ADP/ATP translocase tlc family.

The protein resides in the cell membrane. Provides the rickettsial cell with host ATP in exchange for rickettsial ADP. This is an obligate exchange system. This energy acquiring activity is an important component of rickettsial parasitism. This chain is ADP,ATP carrier protein 5 (tlcE), found in Rickettsia bellii (strain RML369-C).